An 837-amino-acid chain; its full sequence is E3 ubiquitin-protein ligase bre-1 (837 aa).

Residues 1–33 (MMKRSNEGIGGENYASSPSDDGQQKRRKIQFEP) form a disordered region. The segment at 1–313 (MMKRSNEGIG…AKEIENLRLE (313 aa)) is interaction with ubc-1. 2 coiled-coil regions span residues 54–89 (TSKL…ESNF) and 185–253 (HKEL…KHMR). The tract at residues 269–302 (GQSGGNGGATPSSSGTTNATEKKISAPDIPPSET) is disordered. Residues 277–287 (ATPSSSGTTNA) show a composition bias toward polar residues. Coiled coils occupy residues 300–397 (SETA…AFRS), 458–651 (DEMK…KAQT), and 677–763 (VQFK…NESV). The RING-type zinc-finger motif lies at 785–824 (CPSCKTRPKDCIMLKCYHLFCETCIKTMYDTRQRKCPKCN).

It belongs to the BRE1 family. As to quaternary structure, interacts with ubc-1. Interacts with mrg-1. As to expression, in adult animals, expressed in oocytes, germ cells, pharyngeal and intestinal cells.

It localises to the nucleus. The catalysed reaction is S-ubiquitinyl-[E2 ubiquitin-conjugating enzyme]-L-cysteine + [acceptor protein]-L-lysine = [E2 ubiquitin-conjugating enzyme]-L-cysteine + N(6)-ubiquitinyl-[acceptor protein]-L-lysine.. Its pathway is protein modification; protein ubiquitination. Its function is as follows. E3 ubiquitin-protein ligase that mediates monoubiquitination of 'Lys-117' of histone H2B. H2B 'Lys-117' ubiquitination gives a specific tag for epigenetic transcriptional activation and is also prerequisite for histone H3 'Lys-4' and 'Lys-79' methylation. Involved in regulating stem cell proliferative fate. This chain is E3 ubiquitin-protein ligase bre-1 (rfp-1), found in Caenorhabditis elegans.